We begin with the raw amino-acid sequence, 304 residues long: GS homeobox 2 (304 aa).

Positions 116–151 (AQFCPRVNHAHHHHHPPQHHHHHHQPQQPGSAAAAA) are disordered. A compositionally biased stretch (basic residues) spans 123-140 (NHAHHHHHPPQHHHHHHQ). Residues 141–151 (PQQPGSAAAAA) are compositionally biased toward low complexity. The homeobox DNA-binding region spans 202-261 (GKRMRTAFTSTQLLELEREFSSNMYLSRLRRIEIATYLNLSEKQVKIWFQNRRVKHKKEG). Residues 283 to 304 (RSEDEDSLSPASANDDKEISPL) form a disordered region.

This sequence belongs to the Antp homeobox family.

It is found in the nucleus. It localises to the cytoplasm. Transcription factor that binds 5'-CNAATTAG-3' DNA sequence and regulates the expression of numerous genes including genes important for brain development. During telencephalic development, causes ventralization of pallial progenitors and, depending on the developmental stage, specifies different neuronal fates. At early stages, necessary and sufficient to correctly specify the ventral lateral ganglionic eminence (LGE) and its major derivatives, the striatal projection neurons. At later stages, may specify LGE progenitors toward dorsal LGE fates, including olfactory bulb interneurons. The polypeptide is GS homeobox 2 (GSX2) (Homo sapiens (Human)).